Here is a 307-residue protein sequence, read N- to C-terminus: 4-hydroxy-3-methylbut-2-enyl diphosphate reductase (307 aa).

A [4Fe-4S] cluster-binding site is contributed by Cys13. 2 residues coordinate (2E)-4-hydroxy-3-methylbut-2-enyl diphosphate: His42 and His75. 2 residues coordinate dimethylallyl diphosphate: His42 and His75. Positions 42 and 75 each coordinate isopentenyl diphosphate. Position 97 (Cys97) interacts with [4Fe-4S] cluster. His125 contacts (2E)-4-hydroxy-3-methylbut-2-enyl diphosphate. His125 contacts dimethylallyl diphosphate. His125 is an isopentenyl diphosphate binding site. Glu127 functions as the Proton donor in the catalytic mechanism. Thr165 lines the (2E)-4-hydroxy-3-methylbut-2-enyl diphosphate pocket. Cys195 is a [4Fe-4S] cluster binding site. The (2E)-4-hydroxy-3-methylbut-2-enyl diphosphate site is built by Ser223, Ser224, Asn225, and Ser267. Positions 223, 224, 225, and 267 each coordinate dimethylallyl diphosphate. Positions 223, 224, 225, and 267 each coordinate isopentenyl diphosphate.

The protein belongs to the IspH family. The cofactor is [4Fe-4S] cluster.

It catalyses the reaction isopentenyl diphosphate + 2 oxidized [2Fe-2S]-[ferredoxin] + H2O = (2E)-4-hydroxy-3-methylbut-2-enyl diphosphate + 2 reduced [2Fe-2S]-[ferredoxin] + 2 H(+). The catalysed reaction is dimethylallyl diphosphate + 2 oxidized [2Fe-2S]-[ferredoxin] + H2O = (2E)-4-hydroxy-3-methylbut-2-enyl diphosphate + 2 reduced [2Fe-2S]-[ferredoxin] + 2 H(+). It participates in isoprenoid biosynthesis; dimethylallyl diphosphate biosynthesis; dimethylallyl diphosphate from (2E)-4-hydroxy-3-methylbutenyl diphosphate: step 1/1. The protein operates within isoprenoid biosynthesis; isopentenyl diphosphate biosynthesis via DXP pathway; isopentenyl diphosphate from 1-deoxy-D-xylulose 5-phosphate: step 6/6. Catalyzes the conversion of 1-hydroxy-2-methyl-2-(E)-butenyl 4-diphosphate (HMBPP) into a mixture of isopentenyl diphosphate (IPP) and dimethylallyl diphosphate (DMAPP). Acts in the terminal step of the DOXP/MEP pathway for isoprenoid precursor biosynthesis. This chain is 4-hydroxy-3-methylbut-2-enyl diphosphate reductase, found in Chlamydia trachomatis serovar D (strain ATCC VR-885 / DSM 19411 / UW-3/Cx).